We begin with the raw amino-acid sequence, 154 residues long: MGLSDGEWQLVLNVWGKVEADLAGHGQEVLIRLFKNHPETLEKFDKFKNLKSEDEMKGSDDLKKHGNTVLSALGGILKKKGQHEAELKPLAQSHATKHKIPVKYLEFISEAIIQVLQSKHPGDFGADAQGAMSKALELFRNDMAAKYKELGFQG.

Residues 2 to 148 enclose the Globin domain; sequence GLSDGEWQLV…FRNDMAAKYK (147 aa). Ser-4 carries the post-translational modification Phosphoserine. His-65 contributes to the nitrite binding site. His-65 provides a ligand contact to O2. The residue at position 68 (Thr-68) is a Phosphothreonine. Position 94 (His-94) interacts with heme b.

It belongs to the globin family. Monomeric.

It is found in the cytoplasm. The protein localises to the sarcoplasm. The catalysed reaction is Fe(III)-heme b-[protein] + nitric oxide + H2O = Fe(II)-heme b-[protein] + nitrite + 2 H(+). It catalyses the reaction H2O2 + AH2 = A + 2 H2O. Its function is as follows. Monomeric heme protein which primary function is to store oxygen and facilitate its diffusion within muscle tissues. Reversibly binds oxygen through a pentacoordinated heme iron and enables its timely and efficient release as needed during periods of heightened demand. Depending on the oxidative conditions of tissues and cells, and in addition to its ability to bind oxygen, it also has a nitrite reductase activity whereby it regulates the production of bioactive nitric oxide. Under stress conditions, like hypoxia and anoxia, it also protects cells against reactive oxygen species thanks to its pseudoperoxidase activity. The polypeptide is Myoglobin (MB) (Ochotona princeps (Southern American pika)).